A 61-amino-acid chain; its full sequence is MHRRARRMPMRPRRSKRVRNRYTMGTFALHGLTHRLPSASLQTTAARHPDVTQFSMPGHYR.

The first 28 residues, 1-28 (MHRRARRMPMRPRRSKRVRNRYTMGTFA), serve as a signal peptide directing secretion.

This is an uncharacterized protein from Mycobacterium tuberculosis (strain ATCC 25618 / H37Rv).